A 676-amino-acid polypeptide reads, in one-letter code: MTQVAKKILVTCALPYANGSIHLGHMLEHIQADIWVRYQRMRGNQVYFICADDAHGTPIMLKAQQMGVAPEQMIADMSQEHQTDFAGFNISYDNYHSTHSEENRELSELIYTRLKENGFIKNRTISQLYDPEKGMFLPDRFVKGTCPNCKSPDQYGDNCEVCSATYSPTELIEPKSVVSGATPVLRDSEHFFFDLPEFSAMLQAWTRSGALQEQVANKMQEWFDSGLQQWDISRDAPYFGFEIPGAPGKYFYVWLDAPIGYMGSFKNLCDKRGDIDFDAFWQKDSDAELYHFIGKDIVYFHSLFWPAMLEGSQFRKPTNLFVHGYVTVNGAKMSKSRGTFIKASTWLQHLDADSLRYYYAAKLSSRIDDIDLNLEDFVQRVNADIVNKVVNLASRNAGFINKRFAGQLSAELADPALYQTFIDASTSIAQAWSSREFSRAVREIMALADAANRYVDEQAPWVVAKQEGRDADLQAICSMGINLFRVLMTWLKPVMPSLAERAEAFLNQPLTWDGIEQPLLNHNIAAFKALYNRIEMDKVNGLIAASKEDTAAAQPAVTGPLADDPLQETISFDDFAKVDMRIALIENAELVDGSDKLLRLTLDIGGEKRNVFSGIRAAYPDPALLVGRLTVMVANLAPRKMRFGLSEGMVMAAGPGGKDIFLLSPDSGAQPGQQVK.

The 'HIGH' region signature appears at 15 to 25; it reads PYANGSIHLGH. Positions 146, 149, 159, and 162 each coordinate Zn(2+). A 'KMSKS' region motif is present at residues 332–336; the sequence is KMSKS. Lys-335 contacts ATP. The tRNA-binding domain maps to 574–676; it reads DFAKVDMRIA…SGAQPGQQVK (103 aa).

Belongs to the class-I aminoacyl-tRNA synthetase family. MetG type 1 subfamily. In terms of assembly, homodimer. It depends on Zn(2+) as a cofactor.

The protein resides in the cytoplasm. The catalysed reaction is tRNA(Met) + L-methionine + ATP = L-methionyl-tRNA(Met) + AMP + diphosphate. Its function is as follows. Is required not only for elongation of protein synthesis but also for the initiation of all mRNA translation through initiator tRNA(fMet) aminoacylation. In Erwinia tasmaniensis (strain DSM 17950 / CFBP 7177 / CIP 109463 / NCPPB 4357 / Et1/99), this protein is Methionine--tRNA ligase.